Consider the following 450-residue polypeptide: UDP-N-acetylmuramoylalanine--D-glutamate ligase (450 aa).

Residue 119–125 (GSNGKTT) coordinates ATP.

It belongs to the MurCDEF family.

It is found in the cytoplasm. The enzyme catalyses UDP-N-acetyl-alpha-D-muramoyl-L-alanine + D-glutamate + ATP = UDP-N-acetyl-alpha-D-muramoyl-L-alanyl-D-glutamate + ADP + phosphate + H(+). The protein operates within cell wall biogenesis; peptidoglycan biosynthesis. Its function is as follows. Cell wall formation. Catalyzes the addition of glutamate to the nucleotide precursor UDP-N-acetylmuramoyl-L-alanine (UMA). This chain is UDP-N-acetylmuramoylalanine--D-glutamate ligase, found in Bacillus cereus (strain AH187).